A 156-amino-acid chain; its full sequence is Succinate dehydrogenase assembly factor 2-A, mitochondrial (156 aa).

Residues 1–24 (MLRQFLVSTAVRRVVVPSMAQTRC) constitute a mitochondrion transit peptide. Residues 35 to 62 (TPGEIVDYDDPPHIPVPEYPSRPDEPLE) are disordered.

Belongs to the SDHAF2 family. As to quaternary structure, interacts with the flavoprotein subunit within the SDH catalytic dimer.

The protein resides in the mitochondrion matrix. In terms of biological role, plays an essential role in the assembly of succinate dehydrogenase (SDH), an enzyme complex (also referred to as respiratory complex II) that is a component of both the tricarboxylic acid (TCA) cycle and the mitochondrial electron transport chain, and which couples the oxidation of succinate to fumarate with the reduction of ubiquinone (coenzyme Q) to ubiquinol. Required for flavinylation (covalent attachment of FAD) of the flavoprotein subunit of the SDH catalytic dimer. The chain is Succinate dehydrogenase assembly factor 2-A, mitochondrial from Drosophila ananassae (Fruit fly).